We begin with the raw amino-acid sequence, 542 residues long: Chaperonin GroEL (542 aa).

ATP-binding positions include 29–32 (TLGP), 86–90 (DGTTT), Gly-413, 476–478 (NAA), and Asp-492.

It belongs to the chaperonin (HSP60) family. As to quaternary structure, forms a cylinder of 14 subunits composed of two heptameric rings stacked back-to-back. Interacts with the co-chaperonin GroES.

Its subcellular location is the cytoplasm. The enzyme catalyses ATP + H2O + a folded polypeptide = ADP + phosphate + an unfolded polypeptide.. In terms of biological role, together with its co-chaperonin GroES, plays an essential role in assisting protein folding. The GroEL-GroES system forms a nano-cage that allows encapsulation of the non-native substrate proteins and provides a physical environment optimized to promote and accelerate protein folding. This chain is Chaperonin GroEL, found in Lactococcus lactis subsp. cremoris (strain SK11).